Here is a 214-residue protein sequence, read N- to C-terminus: Orotate phosphoribosyltransferase (214 aa).

Lysine 26 is a 5-phospho-alpha-D-ribose 1-diphosphate binding site. Orotate is bound at residue 34–35 (FF). 5-phospho-alpha-D-ribose 1-diphosphate contacts are provided by residues 72–73 (YK), arginine 99, lysine 100, lysine 103, histidine 105, and 124–132 (DDVITAGTA). Residues threonine 128 and arginine 156 each coordinate orotate.

This sequence belongs to the purine/pyrimidine phosphoribosyltransferase family. PyrE subfamily. Homodimer. Requires Mg(2+) as cofactor.

The enzyme catalyses orotidine 5'-phosphate + diphosphate = orotate + 5-phospho-alpha-D-ribose 1-diphosphate. The protein operates within pyrimidine metabolism; UMP biosynthesis via de novo pathway; UMP from orotate: step 1/2. In terms of biological role, catalyzes the transfer of a ribosyl phosphate group from 5-phosphoribose 1-diphosphate to orotate, leading to the formation of orotidine monophosphate (OMP). This chain is Orotate phosphoribosyltransferase, found in Actinobacillus succinogenes (strain ATCC 55618 / DSM 22257 / CCUG 43843 / 130Z).